The sequence spans 526 residues: Type 2 glycosyltransferase (526 aa).

Residues 25-45 (PSFDFWYSSTFWLYLFLGLWF) form a helical membrane-spanning segment. 2 N-linked (GlcNAc...) asparagine glycosylation sites follow: N298 and N317. The next 3 helical transmembrane spans lie at 340-360 (FATFTSLAFLIDPLLLASCWW), 375-395 (WSQFVFMFAFTKVVKLMGLFI), and 403-423 (FLPVSVVFGYFHGLVKLYALI). N-linked (GlcNAc...) asparagine glycosylation is found at N426 and N517.

It belongs to the GT2 glycosyltransferase family.

It is found in the cell membrane. Its subcellular location is the secreted. The protein localises to the cell wall. Its function is as follows. Glycosyltransferase involved in the maintenance of the outermost surface of the fungal cell wall. Likely functions in the synthesis of a currently unknown, potentially minor but widespread, extracellular or outer cell wall polysaccharide which plays a key role in facilitating many interactions between plants and fungi by enabling hyphal growth on solid matrices. In Gibberella zeae (strain ATCC MYA-4620 / CBS 123657 / FGSC 9075 / NRRL 31084 / PH-1) (Wheat head blight fungus), this protein is Type 2 glycosyltransferase.